A 309-amino-acid chain; its full sequence is UDP-N-acetylenolpyruvoylglucosamine reductase (309 aa).

The region spanning 34 to 221 (RVGGPAQVLF…TAAREAAQPI (188 aa)) is the FAD-binding PCMH-type domain. R179 is an active-site residue. The active-site Proton donor is S228. The active site involves E298.

The protein belongs to the MurB family. Requires FAD as cofactor.

It localises to the cytoplasm. The enzyme catalyses UDP-N-acetyl-alpha-D-muramate + NADP(+) = UDP-N-acetyl-3-O-(1-carboxyvinyl)-alpha-D-glucosamine + NADPH + H(+). It participates in cell wall biogenesis; peptidoglycan biosynthesis. Cell wall formation. The protein is UDP-N-acetylenolpyruvoylglucosamine reductase of Methylorubrum extorquens (strain CM4 / NCIMB 13688) (Methylobacterium extorquens).